A 688-amino-acid polypeptide reads, in one-letter code: Thyroid hormone-induced protein B (688 aa).

Residues 1 to 20 (MMLSHWVLLLSLGAVWLAEG) form the signal peptide. 4 consecutive MAM domains span residues 26-169 (GSCT…GYCI), 170-330 (ECDF…SCSG), 341-500 (AGCD…SCKI), and 509-669 (GKCT…PCND). N-linked (GlcNAc...) asparagine glycosylation is found at Asn-32 and Asn-135. Residues Asn-358 and Asn-668 are each glycosylated (N-linked (GlcNAc...) asparagine).

The protein localises to the membrane. The protein resides in the secreted. It localises to the extracellular space. The sequence is that of Thyroid hormone-induced protein B from Xenopus laevis (African clawed frog).